A 159-amino-acid polypeptide reads, in one-letter code: Large ribosomal subunit protein uL15 (159 aa).

The segment covering 1-11 has biased composition (basic and acidic residues); the sequence is MKLNELRDNEG. The tract at residues 1-40 is disordered; the sequence is MKLNELRDNEGARYQSKRLGRGIGSGKGKTSGKGVKGQTS. Residues 21–35 are compositionally biased toward gly residues; sequence RGIGSGKGKTSGKGV.

It belongs to the universal ribosomal protein uL15 family. As to quaternary structure, part of the 50S ribosomal subunit.

Binds to the 23S rRNA. The polypeptide is Large ribosomal subunit protein uL15 (Paramagnetospirillum magneticum (strain ATCC 700264 / AMB-1) (Magnetospirillum magneticum)).